The sequence spans 66 residues: Large ribosomal subunit protein bL28 (66 aa).

The tract at residues 1–26 (MAKDAITGARTRFGNQRSHALNSSRR) is disordered. A compositionally biased stretch (polar residues) spans 13–25 (FGNQRSHALNSSR).

It belongs to the bacterial ribosomal protein bL28 family.

The sequence is that of Large ribosomal subunit protein bL28 from Leuconostoc citreum (strain KM20).